The primary structure comprises 592 residues: Glutamine-rich protein 2 (592 aa).

Residues 488–592 are disordered; the sequence is QLQQAQHARP…TRGPRSTAAH (105 aa). The span at 544-567 shows a compositional bias: polar residues; sequence LQSNVSHSSIPTDIASLQGSQQGL.

As to quaternary structure, interacts with AKAP3, ODF2 and TSSK4. Interacts with AKAP4. As to expression, expressed in testis. Not detected in heart, brain, kidney, stomach, ovary, liver, lung and uterus.

The protein resides in the nucleus membrane. The protein localises to the nucleus. It localises to the cytoplasm. It is found in the cell projection. Its subcellular location is the cilium. The protein resides in the flagellum. Functionally, has an essential role in the formation of sperm flagella and flagellar structure maintainance. It acts as a suppressor of ubiquitination and degradation of proteins involved in flagellar development and motility. The protein is Glutamine-rich protein 2 of Mus musculus (Mouse).